Consider the following 126-residue polypeptide: Hydrogenase maturation factor HypA (126 aa).

Position 2 (H2) interacts with Ni(2+). Zn(2+)-binding residues include C78, C81, C97, and C100.

This sequence belongs to the HypA/HybF family.

Its function is as follows. Involved in the maturation of [NiFe] hydrogenases. Required for nickel insertion into the metal center of the hydrogenase. The polypeptide is Hydrogenase maturation factor HypA (Methanococcus maripaludis (strain C5 / ATCC BAA-1333)).